Reading from the N-terminus, the 510-residue chain is Maturase K (510 aa).

Belongs to the intron maturase 2 family. MatK subfamily.

The protein localises to the plastid. It is found in the chloroplast. In terms of biological role, usually encoded in the trnK tRNA gene intron. Probably assists in splicing its own and other chloroplast group II introns. The chain is Maturase K from Cestrum elegans (Red cestrum).